A 210-amino-acid polypeptide reads, in one-letter code: Beta-crystallin A4 (210 aa).

Residues 1-25 form an N-terminal arm region; it reads MSGMFSGSISETSGMSLQCTKSAGH. Beta/gamma crystallin 'Greek key' domains lie at 26–65 and 66–112; these read WKIV…KVLS and GAWV…RPVA. The connecting peptide stretch occupies residues 113–118; that stretch reads CANHRD. Beta/gamma crystallin 'Greek key' domains follow at residues 119 to 160 and 161 to 209; these read SRLT…HVHS and GAWV…RRIQ.

Belongs to the beta/gamma-crystallin family. As to quaternary structure, homo/heterodimer, or complexes of higher-order. The structure of beta-crystallin oligomers seems to be stabilized through interactions between the N-terminal arms.

Crystallins are the dominant structural components of the vertebrate eye lens. In Bos taurus (Bovine), this protein is Beta-crystallin A4 (CRYBA4).